Consider the following 586-residue polypeptide: Old nuclease (586 aa).

The tract at residues 1–163 (MTVRLASVSI…VEDSTKCKNT (163 aa)) is ATPase domain N-terminus. Residue 34 to 38 (NAGKS) coordinates ATP. Residues 164-270 (TTIGKILSAI…SRFGHGTQRS (107 aa)) are dimerization domain. The segment at 271–390 (IQMALIQYLA…TLSNSSYLLF (120 aa)) is ATPase domain C-terminus. The tract at residues 393 to 586 (EVLLVEGKTE…DEMEDFIKWI (194 aa)) is toprim domain. A divalent metal cation is bound by residues Glu398, Glu402, Asp453, Asp455, Asp541, and Glu543. Catalysis depends on Arg570, which acts as the Stabilizes transition state or protonates leaving group.

It belongs to the class 1 OLD nuclease family. Mg(2+) serves as cofactor.

It catalyses the reaction Exonucleolytic cleavage in the 5'- to 3'-direction to yield nucleoside 5'-phosphates.. An exonuclease that acts preferentially on linear dsDNA, processively degrading it from 5'-3', releasing 5'-phosphomononucleotides. Initiates on 5'-phosphate and 5'-hydroxyl ends. Also acts on linear ssDNA, nicked DNA and RNA. ATP enhances but is not necessary for exonuclease activity; has ATPase activity that is not stimulated by DNA. The old protein kills E.coli recB and recC mutants and interferes with phage lambda growth. Both the exonuclease and ATPase activities are required in vivo. Probably interferes with lambda phage by degrading its linear DNA. Isolated as a mutant able to lysogenize E.coli strain C cells normally not susceptible to lysis by phage P2. This chain is Old nuclease, found in Enterobacteriaceae (Bacteriophage P2).